The chain runs to 162 residues: Small ribosomal subunit protein uS9 (162 aa).

Belongs to the universal ribosomal protein uS9 family.

The polypeptide is Small ribosomal subunit protein uS9 (Methylobacterium nodulans (strain LMG 21967 / CNCM I-2342 / ORS 2060)).